The sequence spans 134 residues: Ribosome-binding factor A (134 aa).

The protein belongs to the RbfA family. In terms of assembly, monomer. Binds 30S ribosomal subunits, but not 50S ribosomal subunits or 70S ribosomes.

It is found in the cytoplasm. One of several proteins that assist in the late maturation steps of the functional core of the 30S ribosomal subunit. Associates with free 30S ribosomal subunits (but not with 30S subunits that are part of 70S ribosomes or polysomes). Required for efficient processing of 16S rRNA. May interact with the 5'-terminal helix region of 16S rRNA. The sequence is that of Ribosome-binding factor A from Rhizobium johnstonii (strain DSM 114642 / LMG 32736 / 3841) (Rhizobium leguminosarum bv. viciae).